A 116-amino-acid polypeptide reads, in one-letter code: UPF0122 protein CA_C1753 (116 aa).

Belongs to the UPF0122 family.

Its function is as follows. Might take part in the signal recognition particle (SRP) pathway. This is inferred from the conservation of its genetic proximity to ftsY/ffh. May be a regulatory protein. This Clostridium acetobutylicum (strain ATCC 824 / DSM 792 / JCM 1419 / IAM 19013 / LMG 5710 / NBRC 13948 / NRRL B-527 / VKM B-1787 / 2291 / W) protein is UPF0122 protein CA_C1753.